Consider the following 1408-residue polypeptide: MSASPSPIGAAAGLDHLQARRDEEVVDSEKDALAHDSHAVNSGIPHPTATAPTIGIPIVPISAGRESSAPEEKISRSSIAASSDILHNPPSEKSISSAVPKSHRYKKSKFNFLKSRKKKEEEEKKNKEKEKEASVLPPVSFFALFKFAAPLEIVAMVFGLLLAIAAGSCQPLMTLIFGRLTTSFTNYAVIVNQISQGGLTPETAAALQAAKDDLKTQSGHNALYLMAIGIGMFLATWLYMFIWNVTGELNSKRIRERYLAAVLRQEIAYFDDLGAGEVATRIQTDCHLVQEGTSEKVALVFQYAGTFVCGFVLAFVRSPRLAGALISILPVIMICGGIMMTAMAKFGTAALDHIAKAGSLAEEVIGSIRTVQAFGKEKILGNKFADHIEKSKVIGRKGSIFEGFGLSIMFFAIYAAYALAFYYGGILVSHGDANSGIVINVFMSILIGSFSMAMLAPELAAVTKARGAAAKLFATIDRVPAIDSANKEGLKPDSLHGEISFENVRFHYPSRPSVPILKGFTTTFEAGKTFALVGASGSGKSTVVSLIERFYDPVSGVVKLDGRDIRSLNLNWLRQQIGLVSQEPTLFGTTVRGNVEHGLIGSIYENASPEEKFELVKKACIDANAHGFIMKLPQGYDTMVGERGMLLSGGQKQRVAIARAIVSDPRILLLDEATSALDTQSEGIVQDALDKASRGRTTITIAHRLSTIRDADRIYVMGAGEVIEQGSHNELLNNENGPYAQLVNNQKLAQEAAAEALQEDDDIDDLDDTVLGGASSPMQEKNGQLYRAVTGRSLASIAMDDIQAKRAEDLAAEDKIPSSFALYARLLRMNSADKLIYIFAFIAAICAGMVYPSLAILFGKALSDFEIQDPNELRQALSRKALWYFITALAAAIVIFFQSAGFSRAGWDLNGVLRKKLFTATLRHDIEWFDEDRNSTGAVTSNLADQPQKVQGLFGPTLGTVVQSCATLIGGCIIGLCYGPLLSLIGIACIPILVSGGYIRLKVVVLKDQRMKKLHAASAHLASEAAGAVRTVASLTREEDVRRIYSEALKGPMKLNFRTSIKSQCLFAASQGLTFCIIALVFYIGALWIIDGKYSTASFYTVLNSIVFASIQAGNVFTFVPDASKANSSAASIFRTIDNEPAINAESTEGKMLDHEHVVGHVRIEGVHFRYPTRPGVRVLRNLTIDVPAGTYVALVGPSGCGKSTTIQMLERFYDPLAGRVTLDGIDIKELNLANYRSQISLVSQEPTLYAGTIRFNILLGANKPMEEVTQDEIDAACKDANIYDFIISLPDGFDTEVGGKGSQLSGGQKQRIAIARALIRNPKVLLLDEATSALDSQSEKVVQEALDKAAKGRTTIAIAHRLSSIQHSDQIYYFSEGKVAEHGTHQELLAKKGGYYDLVQMQNLSRQ.

Positions Met1 to Gly13 are enriched in low complexity. Residues Met1–His103 form a disordered region. Over residues Leu17–His38 the composition is skewed to basic and acidic residues. 2 helical membrane passes run Phe147–Gly167 and Leu223–Trp243. Residues Val157 to Lys464 form the ABC transmembrane type-1 1 domain. An N-linked (GlcNAc...) asparagine glycan is attached at Asn244. Helical transmembrane passes span Lys296–Val316, Leu321–Thr341, Ile408–Val428, and Gly436–Ala456. Positions Ile499–Asn744 constitute an ABC transporter 1 domain. Gly534–Ser541 contacts ATP. Transmembrane regions (helical) follow at residues Ile838–Phe858 and Leu882–Phe902. Residues Ile838–Lys1125 enclose the ABC transmembrane type-1 2 domain. Asn934 carries an N-linked (GlcNAc...) asparagine glycan. A run of 4 helical transmembrane segments spans residues Gly952–Cys972, Ile973–Leu993, Gly1072–Gly1092, and Phe1099–Phe1119. Residues Asn1127 and Asn1182 are each glycosylated (N-linked (GlcNAc...) asparagine). The ABC transporter 2 domain occupies Val1162–Met1402. ATP is bound at residue Gly1197 to Ser1204. Asn1404 carries an N-linked (GlcNAc...) asparagine glycan.

This sequence belongs to the ABC transporter superfamily. ABCB family. Multidrug resistance exporter (TC 3.A.1.201) subfamily.

Its subcellular location is the cell membrane. The enzyme catalyses itraconazole(in) + ATP + H2O = itraconazole(out) + ADP + phosphate + H(+). It carries out the reaction voriconazole(in) + ATP + H2O = voriconazole(out) + ADP + phosphate + H(+). It catalyses the reaction fluconazole(in) + ATP + H2O = fluconazole(out) + ADP + phosphate + H(+). Pleiotropic ABC efflux transporter that confers resistance to structurally and functionally unrelated compounds including azoles such as fluconazole (FLC), itraconazole (ITC), posaconazole (POS), nocodazole and voriconazole (VRC). This Cryptococcus deuterogattii (strain R265) (Cryptococcus gattii VGII (strain R265)) protein is ABC multidrug transporter MDR1.